Consider the following 585-residue polypeptide: Testis-specific serine kinase substrate (585 aa).

The segment covering 91–108 (EPDSSGTDSTTEDSGPLA) has biased composition (low complexity). The tract at residues 91–126 (EPDSSGTDSTTEDSGPLALPGPPASPTTPWAPEDPD) is disordered. A phosphoserine mark is found at Ser224, Ser281, and Ser309. Disordered stretches follow at residues 262–309 (SRHG…PSLS) and 559–585 (LEGS…GSEQ).

Phosphorylated on serine residue(s) by STK22A/TSSK1 and STK22B/TSSK2.

The protein localises to the cytoplasm. It localises to the cytoskeleton. Its subcellular location is the microtubule organizing center. It is found in the centrosome. The protein resides in the centriole. In terms of biological role, may play a role in testicular physiology, most probably in the process of spermatogenesis or spermatid development. This chain is Testis-specific serine kinase substrate (Tsks), found in Rattus norvegicus (Rat).